Consider the following 260-residue polypeptide: Creatinine amidohydrolase (260 aa).

Position 34 (E34) interacts with Mn(2+). Zn(2+) contacts are provided by E34, H36, and D45. D45 is a binding site for Mn(2+). A creatine-binding site is contributed by S78. Residue H120 coordinates Mn(2+). H120 provides a ligand contact to Zn(2+). Creatine-binding residues include Y121, W174, D175, and H178. E183 is a binding site for Zn(2+).

The protein belongs to the creatininase superfamily. Homohexamer; trimer of dimers. It depends on Zn(2+) as a cofactor. Mn(2+) serves as cofactor.

The enzyme catalyses creatinine + H2O = creatine. Its pathway is amine and polyamine degradation; creatinine degradation. Is markedly inactivated in vitro by heavy metal ions, N-bromosuccinimide, ethoxyformic anhydride, and dye-sensitized photooxidation. Cyclic amidohydrolase that catalyzes the reversible conversion of creatinine to creatine. Is also active toward glycocyamidine, though the reaction rate is very low, but it is completely inert toward hydantoin and its derivatives. In Pseudomonas putida (Arthrobacter siderocapsulatus), this protein is Creatinine amidohydrolase (crnA).